The sequence spans 700 residues: Elongation factor G (700 aa).

In terms of domain architecture, tr-type G spans 8 to 290; sequence ERYRNIGISA…AVIDYLPAPT (283 aa). Residues 17–24, 88–92, and 142–145 contribute to the GTP site; these read AHIDAGKT, DTPGH, and NKMD.

This sequence belongs to the TRAFAC class translation factor GTPase superfamily. Classic translation factor GTPase family. EF-G/EF-2 subfamily.

It is found in the cytoplasm. Functionally, catalyzes the GTP-dependent ribosomal translocation step during translation elongation. During this step, the ribosome changes from the pre-translocational (PRE) to the post-translocational (POST) state as the newly formed A-site-bound peptidyl-tRNA and P-site-bound deacylated tRNA move to the P and E sites, respectively. Catalyzes the coordinated movement of the two tRNA molecules, the mRNA and conformational changes in the ribosome. This chain is Elongation factor G (fusA), found in Pasteurella multocida (strain Pm70).